A 572-amino-acid chain; its full sequence is SHUGOSHIN 1 (572 aa).

Residues 59-110 adopt a coiled-coil conformation; it reads KHQQQAILISSKENAENLQKENTKLMKVVMERDGIKSDLKKLRIEFQKVQEQ. Disordered regions lie at residues 185 to 221, 244 to 285, 333 to 352, and 484 to 572; these read DADHEHASGSSNANSLQRNEKANSKRRVSGRKNPANS, KLVS…QTET, ARLKSQEPEPSESFHDSIET, and SRRQ…RGGF. The span at 192–201 shows a compositional bias: polar residues; it reads SGSSNANSLQ. Composition is skewed to basic and acidic residues over residues 244-257, 336-352, 523-542, and 552-572; these read KLVSDSDNDAENHI, KSQEPEPSESFHDSIET, ELKRESKKKPTGDESEEMRK, and AAEKIKSYKEPSLKEKMRGGF.

It belongs to the shugoshin family.

Protects sister chromatid centromere cohesion in meiosis I but not through the protection of the cohesin SYN1. Required with SGO2 for full protection of centromeric cohesion during anaphase I. Required to prevent precocious release of pericentromeric cohesins during meiosis. Not necessary for the maintenance of the synaptonemal complex (SC). Not required for monopolar spindle orientation in meiosis I. The sequence is that of SHUGOSHIN 1 from Arabidopsis thaliana (Mouse-ear cress).